Reading from the N-terminus, the 208-residue chain is ATP-dependent Clp protease proteolytic subunit (208 aa).

S105 acts as the Nucleophile in catalysis. H130 is a catalytic residue.

This sequence belongs to the peptidase S14 family. Fourteen ClpP subunits assemble into 2 heptameric rings which stack back to back to give a disk-like structure with a central cavity, resembling the structure of eukaryotic proteasomes.

It localises to the cytoplasm. It catalyses the reaction Hydrolysis of proteins to small peptides in the presence of ATP and magnesium. alpha-casein is the usual test substrate. In the absence of ATP, only oligopeptides shorter than five residues are hydrolyzed (such as succinyl-Leu-Tyr-|-NHMec, and Leu-Tyr-Leu-|-Tyr-Trp, in which cleavage of the -Tyr-|-Leu- and -Tyr-|-Trp bonds also occurs).. In terms of biological role, cleaves peptides in various proteins in a process that requires ATP hydrolysis. Has a chymotrypsin-like activity. Plays a major role in the degradation of misfolded proteins. The polypeptide is ATP-dependent Clp protease proteolytic subunit (Xanthomonas axonopodis pv. citri (strain 306)).